We begin with the raw amino-acid sequence, 214 residues long: Large ribosomal subunit protein uL29m (214 aa).

The protein belongs to the universal ribosomal protein uL29 family. In terms of assembly, component of the mitochondrial large ribosomal subunit. Mature mitochondrial ribosomes consist of a small (37S) and a large (54S) subunit. The 37S subunit contains at least 33 different proteins and 1 molecule of RNA (15S). The 54S subunit contains at least 45 different proteins and 1 molecule of RNA (21S).

It is found in the mitochondrion. This chain is Large ribosomal subunit protein uL29m (mrpl4), found in Aspergillus terreus (strain NIH 2624 / FGSC A1156).